The sequence spans 168 residues: Cytochrome c oxidase subunit 2 (168 aa).

Residues 1 to 3 (MVD) lie on the Cytoplasmic side of the membrane. Residues 4 to 38 (EHKAHKAILAYEKGWLAFSLAMLFVFIALIAYTLA) form a helical membrane-spanning segment. The Periplasmic portion of the chain corresponds to 39-168 (THTAGVIPAG…NMFGTIVVKE (130 aa)). H114, C149, C153, and H157 together coordinate Cu cation.

The protein belongs to the cytochrome c oxidase subunit 2 family.

It is found in the cell membrane. It carries out the reaction 4 Fe(II)-[cytochrome c] + O2 + 8 H(+)(in) = 4 Fe(III)-[cytochrome c] + 2 H2O + 4 H(+)(out). Subunits I and II form the functional core of the enzyme complex. Electrons originating in cytochrome c are transferred via heme a and Cu(A) to the binuclear center formed by heme a3 and Cu(B). This Thermus thermophilus (strain ATCC 27634 / DSM 579 / HB8) protein is Cytochrome c oxidase subunit 2 (cbaB).